Here is a 552-residue protein sequence, read N- to C-terminus: Chaperonin GroEL (552 aa).

ATP contacts are provided by residues 30-33 (TLGP), lysine 51, 87-91 (DGTTT), glycine 415, and aspartate 496.

This sequence belongs to the chaperonin (HSP60) family. Forms a cylinder of 14 subunits composed of two heptameric rings stacked back-to-back. Interacts with the co-chaperonin GroES.

The protein resides in the cytoplasm. It catalyses the reaction ATP + H2O + a folded polypeptide = ADP + phosphate + an unfolded polypeptide.. Its function is as follows. Together with its co-chaperonin GroES, plays an essential role in assisting protein folding. The GroEL-GroES system forms a nano-cage that allows encapsulation of the non-native substrate proteins and provides a physical environment optimized to promote and accelerate protein folding. The sequence is that of Chaperonin GroEL from Paramagnetospirillum magneticum (strain ATCC 700264 / AMB-1) (Magnetospirillum magneticum).